The primary structure comprises 310 residues: Tagatose-6-phosphate kinase (310 aa).

The protein belongs to the carbohydrate kinase PfkB family. LacC subfamily.

The enzyme catalyses D-tagatofuranose 6-phosphate + ATP = D-tagatofuranose 1,6-bisphosphate + ADP + H(+). It participates in carbohydrate metabolism; D-tagatose 6-phosphate degradation; D-glyceraldehyde 3-phosphate and glycerone phosphate from D-tagatose 6-phosphate: step 1/2. This is Tagatose-6-phosphate kinase from Staphylococcus aureus (strain MRSA252).